Here is a 150-residue protein sequence, read N- to C-terminus: Large ribosomal subunit protein bL9 (150 aa).

It belongs to the bacterial ribosomal protein bL9 family.

Its function is as follows. Binds to the 23S rRNA. The polypeptide is Large ribosomal subunit protein bL9 (Polaromonas naphthalenivorans (strain CJ2)).